The primary structure comprises 396 residues: L-lactate dehydrogenase (396 aa).

The 380-residue stretch at 1 to 380 folds into the FMN hydroxy acid dehydrogenase domain; that stretch reads MIISAASDYR…SGDSLVQELG (380 aa). Residue Y24 participates in substrate binding. FMN is bound by residues S106 and Q127. A substrate-binding site is contributed by Y129. T155 contacts FMN. Residue R164 participates in substrate binding. K251 is a binding site for FMN. Residue H275 is the Proton acceptor of the active site. R278 is a binding site for substrate. An FMN-binding site is contributed by 306–330; the sequence is DSGIRNGLDVVRMIALGADTVLLGR.

It belongs to the FMN-dependent alpha-hydroxy acid dehydrogenase family. FMN is required as a cofactor.

It is found in the cell inner membrane. The catalysed reaction is (S)-lactate + A = pyruvate + AH2. Its function is as follows. Catalyzes the conversion of L-lactate to pyruvate. Is coupled to the respiratory chain. The chain is L-lactate dehydrogenase from Salmonella typhimurium (strain LT2 / SGSC1412 / ATCC 700720).